The chain runs to 125 residues: Large ribosomal subunit protein bL12 (125 aa).

This sequence belongs to the bacterial ribosomal protein bL12 family. In terms of assembly, homodimer. Part of the ribosomal stalk of the 50S ribosomal subunit. Forms a multimeric L10(L12)X complex, where L10 forms an elongated spine to which 2 to 4 L12 dimers bind in a sequential fashion. Binds GTP-bound translation factors.

Forms part of the ribosomal stalk which helps the ribosome interact with GTP-bound translation factors. Is thus essential for accurate translation. This is Large ribosomal subunit protein bL12 from Mannheimia succiniciproducens (strain KCTC 0769BP / MBEL55E).